We begin with the raw amino-acid sequence, 787 residues long: MGIELLCLFFLFLGRNDHVQGGCAMGGAETCEDCLLIGPQCAWCSQENFTHLSGVGERCDTPANLLAKGCQLTFIENPVSQVEILTNKPLSIGRQKNSSNIVQISPQSLALKLRPGLEQTLQVQVRQTEDYPVDLYYLMDLSASMDDDLNTIKELGSLLSKEMSKLTSNFRLGFGSFVEKPISPFMKTTPEEIANPCSSIPYFCLPTFGFKHILPLTNDAERFNEIVKNQKISANIDTPEGGFDAIMQAAVCKEKIGWRNDSLHLLVFVSDADSHFGMDSKLAGIVIPNDGLCHLDSKNEYSMSTILEYPTIGQLIDKLVQNNVLLIFAVTQEQVHLYENYAKLIPGATVGVLQKDSGNILQLIISAYEELRSEVELEVLGDTEGLNLSFTAICNSGVPFPHQKKCSHMKVGDTASFNVTVSLPNCERRSRHVILKPVGLGDALEILVSPECSCDCQKEVEVNSSKCSNGNGSFQCGVCACNPGHVGHHCECGEDTLSTESCKEAPELPSCSGRGDCYCGQCVCHLSPYGNIYGPYCQCDNFSCVRHKGLLCGDNGDCDCGECVCRSGWTGEYCNCTTSTDPCVSEDGILCSGRGDCVCGKCICTNPGASGPACERCPTCSDPCNSKRNCIECYLSADGQAQEECVDKCKLAGATINEEEDFSKDSSVSCSLQGENECLITFLLTTDNEGKTVIHSIEKDCPKPPNIPMIMLGVSLAILLIGVALLCIWKLLVSFHDRKEVAKFEAERSKAKWQTGTNPLYRGSTSTFKNVTYKHKEKQKVDLSTDG.

Residues 1 to 21 (MGIELLCLFFLFLGRNDHVQG) form the signal peptide. Residues 22 to 71 (GCAMGGAETCEDCLLIGPQCAWCSQENFTHLSGVGERCDTPANLLAKGCQ) enclose the PSI domain. Residues 22-708 (GCAMGGAETC…KDCPKPPNIP (687 aa)) lie on the Extracellular side of the membrane. 19 disulfides stabilise this stretch: cysteine 23–cysteine 41, cysteine 31–cysteine 454, cysteine 34–cysteine 59, cysteine 44–cysteine 70, cysteine 197–cysteine 204, cysteine 252–cysteine 293, cysteine 394–cysteine 406, cysteine 426–cysteine 452, cysteine 456–cysteine 476, cysteine 467–cysteine 479, cysteine 481–cysteine 490, cysteine 492–cysteine 519, cysteine 502–cysteine 517, cysteine 511–cysteine 522, cysteine 524–cysteine 537, cysteine 539–cysteine 560, cysteine 544–cysteine 558, cysteine 552–cysteine 563, and cysteine 565–cysteine 574. Residues asparagine 48 and asparagine 97 are each glycosylated (N-linked (GlcNAc...) asparagine). Residues 131–371 (YPVDLYYLMD…QLIISAYEEL (241 aa)) enclose the VWFA domain. Mg(2+) is bound by residues aspartate 140, serine 142, and serine 144. Residues serine 144, aspartate 147, aspartate 148, and glutamate 179 each coordinate Ca(2+). Positions 235, 237, 239, and 240 each coordinate Ca(2+). Glutamate 240 is a Mg(2+) binding site. N-linked (GlcNAc...) asparagine glycosylation occurs at asparagine 260. Ca(2+) is bound by residues aspartate 271 and lysine 355. The N-linked (GlcNAc...) asparagine glycan is linked to asparagine 387. N-linked (GlcNAc...) asparagine glycosylation occurs at asparagine 418. 4 consecutive I-EGF domains span residues 456–491 (CQKE…HHCE), 492–538 (CGED…PYCQ), 539–575 (CDNF…EYCN), and 576–615 (CTTS…PACE). N-linked (GlcNAc...) asparagine glycans are attached at residues asparagine 463 and asparagine 471. A glycan (N-linked (GlcNAc...) asparagine) is linked at asparagine 541. Residue asparagine 575 is glycosylated (N-linked (GlcNAc...) asparagine). Intrachain disulfides connect cysteine 576–cysteine 599, cysteine 583–cysteine 597, cysteine 591–cysteine 602, cysteine 604–cysteine 614, cysteine 617–cysteine 620, cysteine 624–cysteine 670, cysteine 630–cysteine 649, cysteine 633–cysteine 645, and cysteine 678–cysteine 701. A helical membrane pass occupies residues 709 to 729 (MIMLGVSLAILLIGVALLCIW). Residues 730 to 757 (KLLVSFHDRKEVAKFEAERSKAKWQTGT) form an interaction with HAX1 region. At 730 to 787 (KLLVSFHDRKEVAKFEAERSKAKWQTGTNPLYRGSTSTFKNVTYKHKEKQKVDLSTDG) the chain is on the cytoplasmic side.

This sequence belongs to the integrin beta chain family. As to quaternary structure, heterodimer of an alpha and a beta subunit. Interacts with FLNB. Interacts with HAX1. ITGAV:ITGB6 interacts with FBN1. ITGAV:ITGB6 interacts with TGFB1.

The protein localises to the cell membrane. It localises to the cell junction. Its subcellular location is the focal adhesion. Its function is as follows. Integrin alpha-V:beta-6 (ITGAV:ITGB6) is a receptor for fibronectin and cytotactin. It recognizes the sequence R-G-D in its ligands. ITGAV:ITGB6 acts as a receptor for fibrillin-1 (FBN1) and mediates R-G-D-dependent cell adhesion to FBN1. Integrin alpha-V:beta-6 (ITGAV:ITGB6) mediates R-G-D-dependent release of transforming growth factor beta-1 (TGF-beta-1) from regulatory Latency-associated peptide (LAP), thereby playing a key role in TGF-beta-1 activation. In Ovis aries (Sheep), this protein is Integrin beta-6 (ITGB6).